The chain runs to 146 residues: Hemoglobin subunit beta-S/F (146 aa).

N-acetylvaline is present on valine 1. Positions 2 to 146 constitute a Globin domain; that stretch reads HLTDGEKNAI…VANALSHKYH (145 aa). Residue serine 44 is modified to Phosphoserine. Lysine 59 bears the N6-acetyllysine mark. Histidine 63 contacts heme b. At lysine 82 the chain carries N6-acetyllysine. Histidine 92 is a heme b binding site. The residue at position 93 (cysteine 93) is an S-nitrosocysteine. Position 144 is an N6-acetyllysine (lysine 144).

Belongs to the globin family. As to quaternary structure, heterotetramer of two alpha chains and two beta chains. In terms of tissue distribution, red blood cells.

Involved in oxygen transport from the lung to the various peripheral tissues. This is Hemoglobin subunit beta-S/F from Urocitellus townsendii (Townsend's ground squirrel).